The sequence spans 146 residues: Bradykinin-like neuropeptide (146 aa).

The N-terminal stretch at 1-24 (MTSSIYGFITLSVVALISQTTCRS) is a signal peptide. 2 propeptides span residues 25–80 (LDLL…LMEA) and 92–146 (LRSY…FRYG).

In terms of tissue distribution, neuron L5.

It localises to the secreted. Functionally, may have important functions in renal physiology and in animal behavior, as does bradykinin. The protein is Bradykinin-like neuropeptide (LUQ-1) of Aplysia californica (California sea hare).